The sequence spans 362 residues: Alkanal monooxygenase alpha chain (362 aa).

The protein belongs to the bacterial luciferase oxidoreductase family. As to quaternary structure, heterodimer of an alpha and a beta chain.

It carries out the reaction a long-chain fatty aldehyde + FMNH2 + O2 = a long-chain fatty acid + hnu + FMN + H2O + 2 H(+). Light-emitting reaction in luminous bacteria. The chain is Alkanal monooxygenase alpha chain (luxA) from Photorhabdus luminescens (Xenorhabdus luminescens).